The sequence spans 251 residues: Insulin-induced gene 1 protein (251 aa).

Residues 1–58 are Cytoplasmic-facing; that stretch reads MQTLEEHCWSCSCTRGRDKKGTKVSAWLARRVGKAMSSLNSLLSLAYSTLASSEGRSL. Residues 59 to 81 form a helical membrane-spanning segment; that stretch reads IQRSLVLFTVGVFLALVLNLLQI. Topologically, residues 82–100 are extracellular; it reads QRNVTLFPEEVIATIFSSA. Residues 101–118 form a helical membrane-spanning segment; it reads WWVPPCCGTAAAVVGLLY. The Cytoplasmic portion of the chain corresponds to 119–133; the sequence is PCIDSRIGEPHKFKR. Residues 134 to 156 traverse the membrane as a helical segment; sequence EWASVMRCIAVFVGINHASAKLD. Residues 157-159 are Extracellular-facing; sequence FAN. Residues 160–178 traverse the membrane as a helical segment; the sequence is NVQLSLTLAALSLGLWWTF. The Cytoplasmic segment spans residues 179 to 183; it reads DRSRS. A helical transmembrane segment spans residues 184 to 205; sequence GLGLGITIAFLATLITQFLVYN. Over 206–219 the chain is Extracellular; that stretch reads GVYQYTSPDFLYIR. Residues 220–237 traverse the membrane as a helical segment; that stretch reads SWLPCIFFSGGVTVGNIG. Over 238–251 the chain is Cytoplasmic; that stretch reads RQLAMGSSEKTHGD. The KxHxx signature appears at 245–251; it reads SEKTHGD.

It belongs to the INSIG family. As to quaternary structure, interacts with scap; interaction is direct and only takes place in the presence of sterols; it prevents interaction between scap and the coat protein complex II (COPII). Associates with the SCAP-SREBP complex; association is mediated via its interaction with scap and only takes place in the presence of sterols.

It localises to the endoplasmic reticulum membrane. In terms of biological role, oxysterol-binding protein that mediates feedback control of cholesterol synthesis by controlling both endoplasmic reticulum to Golgi transport of scap and degradation of hmgcr. Acts as a negative regulator of cholesterol biosynthesis by mediating the retention of the SCAP-SREBP complex in the endoplasmic reticulum, thereby blocking the processing of sterol regulatory element-binding proteins (SREBPs). Binds oxysterol, including 25-hydroxycholesterol, regulating interaction with scap and retention of the SCAP-SREBP complex in the endoplasmic reticulum. In presence of oxysterol, interacts with scap, retaining the SCAP-SREBP complex in the endoplasmic reticulum, thereby preventing scap from escorting SREBPs to the Golgi. Sterol deprivation reduces oxysterol-binding, disrupting the interaction between insig1 and scap, thereby promoting Golgi transport of the SCAP-SREBP complex, followed by processing and nuclear translocation of SREBPs. Also regulates cholesterol synthesis by regulating degradation of hmgcr. The polypeptide is Insulin-induced gene 1 protein (Xenopus laevis (African clawed frog)).